Here is a 468-residue protein sequence, read N- to C-terminus: Squamosa promoter-binding-like protein 5 (468 aa).

The segment at proline 204–proline 281 adopts an SBP-type zinc-finger fold. Zn(2+) is bound by residues cysteine 207, cysteine 212, cysteine 229, histidine 232, cysteine 248, cysteine 251, histidine 255, and cysteine 267. A Bipartite nuclear localization signal motif is present at residues lysine 264–lysine 280. Disordered stretches follow at residues arginine 270–isoleucine 305, threonine 354–leucine 374, and histidine 405–asparagine 458. Acidic residues predominate over residues glutamine 363–glycine 372. A compositionally biased stretch (low complexity) spans asparagine 438–asparagine 458.

As to expression, ubiquitous.

It localises to the nucleus. In terms of biological role, trans-acting factor that binds specifically to the consensus nucleotide sequence 5'-TNCGTACAA-3'. In Oryza sativa subsp. japonica (Rice), this protein is Squamosa promoter-binding-like protein 5 (SPL5).